The sequence spans 185 residues: Ribosome-recycling factor (185 aa).

The protein belongs to the RRF family.

The protein localises to the cytoplasm. Its function is as follows. Responsible for the release of ribosomes from messenger RNA at the termination of protein biosynthesis. May increase the efficiency of translation by recycling ribosomes from one round of translation to another. Functionally, plays a role in sporulation. In Bacillus subtilis (strain 168), this protein is Ribosome-recycling factor.